The chain runs to 229 residues: Flagellar L-ring protein (229 aa).

A signal peptide spans 1–25 (MKQVRLLPSATVRAACAVAVAALAG). Cysteine 26 carries the N-palmitoyl cysteine lipid modification. Cysteine 26 is lipidated: S-diacylglycerol cysteine.

It belongs to the FlgH family. As to quaternary structure, the basal body constitutes a major portion of the flagellar organelle and consists of four rings (L,P,S, and M) mounted on a central rod.

It is found in the cell outer membrane. It localises to the bacterial flagellum basal body. Its function is as follows. Assembles around the rod to form the L-ring and probably protects the motor/basal body from shearing forces during rotation. The sequence is that of Flagellar L-ring protein from Burkholderia vietnamiensis (strain G4 / LMG 22486) (Burkholderia cepacia (strain R1808)).